The primary structure comprises 86 residues: Co-chaperonin GroES (86 aa).

This sequence belongs to the GroES chaperonin family. In terms of assembly, heptamer of 7 subunits arranged in a ring. Interacts with the chaperonin GroEL.

Its subcellular location is the cytoplasm. Its function is as follows. Together with the chaperonin GroEL, plays an essential role in assisting protein folding. The GroEL-GroES system forms a nano-cage that allows encapsulation of the non-native substrate proteins and provides a physical environment optimized to promote and accelerate protein folding. GroES binds to the apical surface of the GroEL ring, thereby capping the opening of the GroEL channel. In Campylobacter jejuni subsp. doylei (strain ATCC BAA-1458 / RM4099 / 269.97), this protein is Co-chaperonin GroES.